The sequence spans 390 residues: MTDISDESNIGYEEEVEEEIMEDDLDINNDGCDGEDKKKNSGFLKQFASKQPFYKMSLPISYSEPRSFLEKLSDQGSFLDILLKVKNIENEDDRFLEILKFYLSGWIQQKIAKSPFNPVIGETYQCKWVHKDGSTTEYIAEQISHHPPSSSFCMHNQQNGVIFHSHLSPTSKFWGNSLENSMEGKLVYEIPSLQEEYIVEAPKIIVKGVLVGSLSTETVGSTNLTCKKTGYSAEIEFKGKGLFKSKHSLLVKVKHPSSKKALYTLEGKFDGTVSITSTKTGKTTAFFDINSDQIQPITSPLHELEENNSRVVWKHVIENLLNNNEDEASKQKTIVEENQRNLAKTREGKPWIPKNFIKVDNDDNEDSANQNNVYYYSKLIEIRKEIMKNN.

It belongs to the OSBP family.

The chain is Oxysterol-binding protein 10 (osbJ) from Dictyostelium discoideum (Social amoeba).